We begin with the raw amino-acid sequence, 264 residues long: 3-methyl-2-oxobutanoate hydroxymethyltransferase (264 aa).

Positions 45 and 84 each coordinate Mg(2+). 3-methyl-2-oxobutanoate is bound by residues 45–46 (DS), aspartate 84, and lysine 112. Position 114 (glutamate 114) interacts with Mg(2+). Residue glutamate 181 is the Proton acceptor of the active site.

It belongs to the PanB family. In terms of assembly, homodecamer; pentamer of dimers. Mg(2+) is required as a cofactor.

The protein localises to the cytoplasm. It catalyses the reaction 3-methyl-2-oxobutanoate + (6R)-5,10-methylene-5,6,7,8-tetrahydrofolate + H2O = 2-dehydropantoate + (6S)-5,6,7,8-tetrahydrofolate. It functions in the pathway cofactor biosynthesis; (R)-pantothenate biosynthesis; (R)-pantoate from 3-methyl-2-oxobutanoate: step 1/2. Functionally, catalyzes the reversible reaction in which hydroxymethyl group from 5,10-methylenetetrahydrofolate is transferred onto alpha-ketoisovalerate to form ketopantoate. This Shewanella sp. (strain MR-4) protein is 3-methyl-2-oxobutanoate hydroxymethyltransferase.